A 412-amino-acid polypeptide reads, in one-letter code: Eukaryotic initiation factor 4A-1 (412 aa).

Residue alanine 2 is modified to N-acetylalanine. A Q motif motif is present at residues 39 to 67 (ESFDAMGLQENLLRGIYAYGFEKPSAIQQ). A Helicase ATP-binding domain is found at 70–240 (IVPFCKGLDV…RKFMSKPVRI (171 aa)). 83–90 (AQSGTGKT) contributes to the ATP binding site. Serine 104 is subject to Phosphoserine. Residue threonine 145 is modified to Phosphothreonine. Residues 188 to 191 (DEAD) carry the DEAD box motif. The 162-residue stretch at 251 to 412 (GIKQFYVNVE…ELPSNVADLL (162 aa)) folds into the Helicase C-terminal domain.

The protein belongs to the DEAD box helicase family. eIF4A subfamily. As to quaternary structure, eIF4F is a multi-subunit complex, the composition of which varies with external and internal environmental conditions. It is composed of at least EIF4A, EIF4E and EIF4G. Interacts with CDKA-1. Interacts with MRF1, MRF2, MRF3/ECIP1 and MRF4. Highly expressed in the whole plant.

It localises to the cytoplasm. It carries out the reaction ATP + H2O = ADP + phosphate + H(+). In terms of biological role, ATP-dependent RNA helicase which is a subunit of the eIF4F complex involved in cap recognition and is required for mRNA binding to ribosome. In the current model of translation initiation, eIF4A unwinds RNA secondary structures in the 5'-UTR of mRNAs which is necessary to allow efficient binding of the small ribosomal subunit, and subsequent scanning for the initiator codon. The protein is Eukaryotic initiation factor 4A-1 of Arabidopsis thaliana (Mouse-ear cress).